The chain runs to 522 residues: 2-isopropylmalate synthase (522 aa).

The Pyruvate carboxyltransferase domain occupies 5–267; the sequence is VIIFDTTLRD…ETGINAKEIH (263 aa). Mn(2+)-binding residues include Asp-14, His-202, His-204, and Asn-238. A regulatory domain region spans residues 392–522; sequence QLQQLVVQSD…MQKNRELGGV (131 aa).

The protein belongs to the alpha-IPM synthase/homocitrate synthase family. LeuA type 1 subfamily. Homodimer. Mn(2+) serves as cofactor.

The protein resides in the cytoplasm. It catalyses the reaction 3-methyl-2-oxobutanoate + acetyl-CoA + H2O = (2S)-2-isopropylmalate + CoA + H(+). The protein operates within amino-acid biosynthesis; L-leucine biosynthesis; L-leucine from 3-methyl-2-oxobutanoate: step 1/4. Catalyzes the condensation of the acetyl group of acetyl-CoA with 3-methyl-2-oxobutanoate (2-ketoisovalerate) to form 3-carboxy-3-hydroxy-4-methylpentanoate (2-isopropylmalate). In Shewanella baltica (strain OS155 / ATCC BAA-1091), this protein is 2-isopropylmalate synthase.